A 728-amino-acid chain; its full sequence is Ankyrin repeat protein A (728 aa).

5 ANK repeats span residues 381–410 (INLP…ETGY), 429–458 (NGFS…KLAA), 477–506 (TSSH…LLIR), 525–554 (YGCP…SLAQ), and 573–602 (ARDT…TLFN).

It belongs to the Toxin_15 family.

The sequence is that of Ankyrin repeat protein A (arpA) from Escherichia coli (strain K12).